A 1295-amino-acid chain; its full sequence is Phosphoribosylformylglycinamidine synthase (1295 aa).

Positions 305 to 327 (WPGAATGSGGEIRDEGATGRGAK) are disordered. ATP contacts are provided by residues 307–318 (GAATGSGGEIRD) and alanine 678. 3 residues coordinate Mg(2+): glutamate 718, asparagine 722, and aspartate 884. Serine 886 contributes to the ATP binding site. The region spanning 1042–1295 (VAVLREQGVN…IFRNARKQLG (254 aa)) is the Glutamine amidotransferase type-1 domain. The Nucleophile role is filled by cysteine 1135. Catalysis depends on residues histidine 1260 and glutamate 1262.

The protein in the N-terminal section; belongs to the FGAMS family. As to quaternary structure, monomer.

Its subcellular location is the cytoplasm. It carries out the reaction N(2)-formyl-N(1)-(5-phospho-beta-D-ribosyl)glycinamide + L-glutamine + ATP + H2O = 2-formamido-N(1)-(5-O-phospho-beta-D-ribosyl)acetamidine + L-glutamate + ADP + phosphate + H(+). The protein operates within purine metabolism; IMP biosynthesis via de novo pathway; 5-amino-1-(5-phospho-D-ribosyl)imidazole from N(2)-formyl-N(1)-(5-phospho-D-ribosyl)glycinamide: step 1/2. Its function is as follows. Phosphoribosylformylglycinamidine synthase involved in the purines biosynthetic pathway. Catalyzes the ATP-dependent conversion of formylglycinamide ribonucleotide (FGAR) and glutamine to yield formylglycinamidine ribonucleotide (FGAM) and glutamate. The polypeptide is Phosphoribosylformylglycinamidine synthase (Shigella boydii serotype 4 (strain Sb227)).